The primary structure comprises 611 residues: V-type proton ATPase catalytic subunit A (611 aa).

Gly-244–Thr-251 contacts ATP.

This sequence belongs to the ATPase alpha/beta chains family. In terms of assembly, V-ATPase is a heteromultimeric enzyme made up of two complexes: the ATP-hydrolytic V1 complex and the proton translocation V0 complex. The V1 complex consists of three catalytic AB heterodimers that form a heterohexamer, three peripheral stalks each consisting of EG heterodimers, one central rotor including subunits D and F, and the regulatory subunits C and H. The proton translocation complex V0 consists of the proton transport subunit a, a ring of proteolipid subunits c9c'', rotary subunit d and subunit e.

Its subcellular location is the cell membrane. It is found in the vacuole. It localises to the vesicle. The enzyme catalyses ATP + H2O + 4 H(+)(in) = ADP + phosphate + 5 H(+)(out). Its activity is regulated as follows. ATP hydrolysis occurs at the interface between the nucleotide-binding domains of subunits A and B. ATP hydrolysis triggers a conformational change in the subunits D and F, which induces a shift of subunit d. The c-ring is subsequently rotated and results in a continuous proton translocation across the membrane. Its function is as follows. Catalytic subunit of the V1 complex of vacuolar(H+)-ATPase (V-ATPase), a multisubunit enzyme composed of a peripheral complex (V1) that hydrolyzes ATP and a membrane integral complex (V0) that translocates protons. V-ATPase is responsible for acidifying and maintaining the pH of intracellular compartments and in some cell types, is targeted to the plasma membrane, where it is responsible for acidifying the extracellular environment. During the trophozoite stage, involved in the acidification of the extracellular space next to the cell membrane. In Plasmodium falciparum (isolate 3D7), this protein is V-type proton ATPase catalytic subunit A.